The chain runs to 267 residues: Small ribosomal subunit protein uS2 (267 aa).

Residues 234–267 are disordered; sequence DNAEEELAEAISQEEPSAAEELPDDMADNENEFE. Acidic residues predominate over residues 250-267; the sequence is SAAEELPDDMADNENEFE.

It belongs to the universal ribosomal protein uS2 family.

The polypeptide is Small ribosomal subunit protein uS2 (Dichelobacter nodosus (strain VCS1703A)).